The sequence spans 103 residues: MSAVRIKKGDTVKVIAGKDKGKEGKVLSVNAKNHTALVEGVNMVTKHAKPSAANQQGGILHQEAPIDISNIAYSLKGKETKIGYDFKDGKKVRVAKATGEVID.

This sequence belongs to the universal ribosomal protein uL24 family. As to quaternary structure, part of the 50S ribosomal subunit.

Functionally, one of two assembly initiator proteins, it binds directly to the 5'-end of the 23S rRNA, where it nucleates assembly of the 50S subunit. Its function is as follows. One of the proteins that surrounds the polypeptide exit tunnel on the outside of the subunit. This is Large ribosomal subunit protein uL24 from Lachnospira eligens (strain ATCC 27750 / DSM 3376 / VPI C15-48 / C15-B4) (Eubacterium eligens).